A 123-amino-acid chain; its full sequence is Large ribosomal subunit protein uL14 (123 aa).

Belongs to the universal ribosomal protein uL14 family. As to quaternary structure, part of the 50S ribosomal subunit. Forms a cluster with proteins L3 and L19. In the 70S ribosome, L14 and L19 interact and together make contacts with the 16S rRNA in bridges B5 and B8.

Its function is as follows. Binds to 23S rRNA. Forms part of two intersubunit bridges in the 70S ribosome. The sequence is that of Large ribosomal subunit protein uL14 from Buchnera aphidicola subsp. Acyrthosiphon kondoi (Acyrthosiphon kondoi symbiotic bacterium).